A 222-amino-acid polypeptide reads, in one-letter code: Large ribosomal subunit protein mL64 (222 aa).

Disordered stretches follow at residues 14 to 40 (LTATLAPGSRGYRAPPPPRREPGPWWP) and 188 to 222 (KRLKEEKQRQKQEARAAALAAAAAQDPAASGAPSS). Positions 144–213 (EKAQADKERR…AALAAAAAQD (70 aa)) form a coiled coil. The short motif at 184 to 200 (KKERKRLKEEKQRQKQE) is the Nuclear localization signal element. A compositionally biased stretch (basic and acidic residues) spans 188 to 201 (KRLKEEKQRQKQEA). The span at 202-216 (RAAALAAAAAQDPAA) shows a compositional bias: low complexity.

Belongs to the mitochondrion-specific ribosomal protein mL64 family. As to quaternary structure, component of the mitochondrial ribosome large subunit (39S) which comprises a 16S rRNA and about 50 distinct proteins. Interacts with GADD45A, GADD45B and GADD45G. Interacts with NR4A1 via the NR4A1 AB domain. Interacts with ATAD3A and ATAD3B.

Its subcellular location is the mitochondrion. It localises to the nucleus. Its function is as follows. Acts as a negative regulator of G1 to S cell cycle phase progression by inhibiting cyclin-dependent kinases. Inhibitory effects are additive with GADD45 proteins but also occur in the absence of GADD45 proteins. Acts as a repressor of the orphan nuclear receptor NR4A1 by inhibiting AB domain-mediated transcriptional activity. May be involved in the hormone-mediated regulation of NR4A1 transcriptional activity. May play a role in mitochondrial protein synthesis. This is Large ribosomal subunit protein mL64 (GADD45GIP1) from Chlorocebus aethiops (Green monkey).